The chain runs to 742 residues: uncharacterized protein (742 aa).

Residues 167–471 (GIVPPEPWGH…AAGAAGGGGA (305 aa)) are disordered. A compositionally biased stretch (pro residues) spans 205–218 (PAPPPSLFAPPPPS). Composition is skewed to polar residues over residues 318–331 (SPAT…NAVS) and 358–368 (GSPQTLSTAPS). The segment covering 386-401 (TAGPAAPPTTGGPPAP) has biased composition (pro residues). Low complexity predominate over residues 421-432 (PLSGGVPGGAVP). Residues 433 to 447 (LGPPPTPPPAAPVTT) are compositionally biased toward pro residues. Over residues 448-464 (PPLASGAPVAPTGAAAG) the composition is skewed to low complexity.

Functionally, may be involved in the ESX-1 / type VII specialized secretion system (T7SS), which exports several proteins including EsxA and EsxB. Involved in DNA conjugation in the recipient strain. This is an uncharacterized protein from Mycolicibacterium smegmatis (strain MKD8) (Mycobacterium smegmatis).